A 322-amino-acid polypeptide reads, in one-letter code: Hydroxypyruvate reductase (322 aa).

NAD(+)-binding positions include 160–161, Asp180, 211–212, 238–240, and Asp264; these read RI, CP, and NSR. Arg240 is an active-site residue. Residue Glu269 is part of the active site. Catalysis depends on His288, which acts as the Proton donor.

It belongs to the D-isomer specific 2-hydroxyacid dehydrogenase family.

The enzyme catalyses (R)-glycerate + NAD(+) = 3-hydroxypyruvate + NADH + H(+). It functions in the pathway carbohydrate metabolism. Its function is as follows. Involved in catabolism of D-apiose. Catalyzes the reduction of 3-hydroxypyruvate to glycerate. The sequence is that of Hydroxypyruvate reductase from Blautia hydrogenotrophica (strain DSM 10507 / JCM 14656 / S5a33) (Ruminococcus hydrogenotrophicus).